The following is a 176-amino-acid chain: Protein GrpE (176 aa).

The protein belongs to the GrpE family. As to quaternary structure, homodimer.

It localises to the cytoplasm. Functionally, participates actively in the response to hyperosmotic and heat shock by preventing the aggregation of stress-denatured proteins, in association with DnaK and GrpE. It is the nucleotide exchange factor for DnaK and may function as a thermosensor. Unfolded proteins bind initially to DnaJ; upon interaction with the DnaJ-bound protein, DnaK hydrolyzes its bound ATP, resulting in the formation of a stable complex. GrpE releases ADP from DnaK; ATP binding to DnaK triggers the release of the substrate protein, thus completing the reaction cycle. Several rounds of ATP-dependent interactions between DnaJ, DnaK and GrpE are required for fully efficient folding. This chain is Protein GrpE, found in Rickettsia bellii (strain OSU 85-389).